We begin with the raw amino-acid sequence, 300 residues long: Putative S-adenosyl-L-methionine-dependent methyltransferase MMAR_1058 (300 aa).

Residues Asp-127 and 156 to 157 (DL) contribute to the S-adenosyl-L-methionine site.

This sequence belongs to the UPF0677 family.

In terms of biological role, exhibits S-adenosyl-L-methionine-dependent methyltransferase activity. This is Putative S-adenosyl-L-methionine-dependent methyltransferase MMAR_1058 from Mycobacterium marinum (strain ATCC BAA-535 / M).